A 444-amino-acid chain; its full sequence is Endoglucanase N (444 aa).

The N-terminal stretch at 1 to 31 is a signal peptide; sequence MWMRRNQIVRKLTLGVVTTVLGMSLSFSALS. Substrate contacts are provided by residues histidine 64, 68–69, tyrosine 95, and histidine 130; that span reads WF. Glutamate 168 serves as the catalytic Proton donor. Residue tyrosine 230 coordinates substrate. Glutamate 256 acts as the Nucleophile in catalysis. Residues 262-263, tryptophan 290, and 295-297 contribute to the substrate site; these read AS and KSE. Residues 332-358 are disordered; sequence ANLGGGDTPTTPTTPTEPTNPGNGTTG. A compositionally biased stretch (low complexity) spans 339–358; that stretch reads TPTTPTTPTEPTNPGNGTTG. Residues 356–444 enclose the CBM3 domain; that stretch reads TTGDVVLQYR…DKANRYVLVT (89 aa).

Belongs to the glycosyl hydrolase 5 (cellulase A) family.

Its subcellular location is the secreted. It catalyses the reaction Endohydrolysis of (1-&gt;4)-beta-D-glucosidic linkages in cellulose, lichenin and cereal beta-D-glucans.. In Pectobacterium atrosepticum (Erwinia carotovora subsp. atroseptica), this protein is Endoglucanase N (celN).